The chain runs to 342 residues: tRNA N6-adenosine threonylcarbamoyltransferase (342 aa).

Fe cation is bound by residues H120 and H124. Residues 142 to 146, D175, G188, D192, and N281 each bind substrate; that span reads VVSGG. D310 provides a ligand contact to Fe cation.

It belongs to the KAE1 / TsaD family. The cofactor is Fe(2+).

Its subcellular location is the cytoplasm. The enzyme catalyses L-threonylcarbamoyladenylate + adenosine(37) in tRNA = N(6)-L-threonylcarbamoyladenosine(37) in tRNA + AMP + H(+). Required for the formation of a threonylcarbamoyl group on adenosine at position 37 (t(6)A37) in tRNAs that read codons beginning with adenine. Is involved in the transfer of the threonylcarbamoyl moiety of threonylcarbamoyl-AMP (TC-AMP) to the N6 group of A37, together with TsaE and TsaB. TsaD likely plays a direct catalytic role in this reaction. The polypeptide is tRNA N6-adenosine threonylcarbamoyltransferase (Geobacillus kaustophilus (strain HTA426)).